A 199-amino-acid polypeptide reads, in one-letter code: Recombination protein RecR (199 aa).

The C4-type zinc-finger motif lies at 56 to 71; the sequence is CRSCFNVAQSELCRIC. Positions 79-174 constitute a Toprim domain; it reads SSICVVEEPK…KVTRLASGLP (96 aa).

It belongs to the RecR family.

Its function is as follows. May play a role in DNA repair. It seems to be involved in an RecBC-independent recombinational process of DNA repair. It may act with RecF and RecO. The sequence is that of Recombination protein RecR from Frankia casuarinae (strain DSM 45818 / CECT 9043 / HFP020203 / CcI3).